The chain runs to 528 residues: Na(+)/H(+) antiporter NhaB (528 aa).

11 helical membrane-spanning segments follow: residues 23 to 43 (VAII…NPFV), 45 to 65 (GWLL…CYPL), 90 to 110 (LVAN…IYFM), 136 to 156 (CFAA…AVVI), 204 to 224 (LLMH…VGEP), 237 to 257 (FGEF…CGLI), 305 to 325 (GIIA…VGLI), 350 to 370 (EEAL…AVII), 392 to 412 (LALF…VFVG), 450 to 470 (ATPN…APLI), and 479 to 499 (VMAL…IMFF).

The protein belongs to the NhaB Na(+)/H(+) (TC 2.A.34) antiporter family.

The protein localises to the cell inner membrane. It catalyses the reaction 2 Na(+)(in) + 3 H(+)(out) = 2 Na(+)(out) + 3 H(+)(in). Na(+)/H(+) antiporter that extrudes sodium in exchange for external protons. Can also transport lithium and potassium. The protein is Na(+)/H(+) antiporter NhaB of Vibrio parahaemolyticus serotype O3:K6 (strain RIMD 2210633).